Consider the following 399-residue polypeptide: S-adenosylmethionine synthase (399 aa).

136–141 serves as a coordination point for ATP; that stretch reads GTGSAD.

The protein belongs to the AdoMet synthase 2 family. The cofactor is Mg(2+).

It carries out the reaction L-methionine + ATP + H2O = S-adenosyl-L-methionine + phosphate + diphosphate. It participates in amino-acid biosynthesis; S-adenosyl-L-methionine biosynthesis; S-adenosyl-L-methionine from L-methionine: step 1/1. Its function is as follows. Catalyzes the formation of S-adenosylmethionine from methionine and ATP. This Methanothrix thermoacetophila (strain DSM 6194 / JCM 14653 / NBRC 101360 / PT) (Methanosaeta thermophila) protein is S-adenosylmethionine synthase.